Reading from the N-terminus, the 235-residue chain is 2-C-methyl-D-erythritol 4-phosphate cytidylyltransferase (235 aa).

The protein belongs to the IspD/TarI cytidylyltransferase family. IspD subfamily. As to quaternary structure, homodimer.

The enzyme catalyses 2-C-methyl-D-erythritol 4-phosphate + CTP + H(+) = 4-CDP-2-C-methyl-D-erythritol + diphosphate. The protein operates within isoprenoid biosynthesis; isopentenyl diphosphate biosynthesis via DXP pathway; isopentenyl diphosphate from 1-deoxy-D-xylulose 5-phosphate: step 2/6. In terms of biological role, catalyzes the formation of 4-diphosphocytidyl-2-C-methyl-D-erythritol from CTP and 2-C-methyl-D-erythritol 4-phosphate (MEP). This chain is 2-C-methyl-D-erythritol 4-phosphate cytidylyltransferase, found in Blochmanniella pennsylvanica (strain BPEN).